A 460-amino-acid chain; its full sequence is Tubby-related protein 3 (460 aa).

2 disordered regions span residues K37–P132 and Y151–A193. A compositionally biased stretch (acidic residues) spans Y151 to G162. The segment covering S166–A188 has biased composition (low complexity).

This sequence belongs to the TUB family. Associates with the IFT complex A (IFT-A). Interacts with SIRT1. As to expression, widely expressed including eyes and adipose depots.

The protein resides in the nucleus. It localises to the cell membrane. Its subcellular location is the cell projection. The protein localises to the cilium. It is found in the cytoplasm. The protein resides in the secreted. In terms of biological role, negative regulator of the Shh signaling transduction pathway: recruited to primary cilia via association with the IFT complex A (IFT-A) and is required for recruitment of G protein-coupled receptor GPR161 to cilia, a promoter of PKA-dependent basal repression machinery in Shh signaling. Binds to phosphorylated inositide (phosphoinositide) lipids. Both IFT-A- and phosphoinositide-binding properties are required to regulate ciliary G protein-coupled receptor trafficking. During adipogenesis, regulates ciliary trafficking of FFAR4 in preadipocytes. This chain is Tubby-related protein 3, found in Mus musculus (Mouse).